The primary structure comprises 373 residues: Peptide chain release factor 2 (373 aa).

Glutamine 251 is subject to N5-methylglutamine.

The protein belongs to the prokaryotic/mitochondrial release factor family. Methylated by PrmC. Methylation increases the termination efficiency of RF2.

The protein resides in the cytoplasm. Its function is as follows. Peptide chain release factor 2 directs the termination of translation in response to the peptide chain termination codons UGA and UAA. The chain is Peptide chain release factor 2 from Salinispora arenicola (strain CNS-205).